A 270-amino-acid chain; its full sequence is NAD kinase (270 aa).

Aspartate 45 serves as the catalytic Proton acceptor. NAD(+) contacts are provided by residues 45–46, 121–122, arginine 147, aspartate 149, 160–165, and alanine 184; these read DG, NE, and TAYSKS.

The protein belongs to the NAD kinase family. Requires a divalent metal cation as cofactor.

It is found in the cytoplasm. It carries out the reaction NAD(+) + ATP = ADP + NADP(+) + H(+). In terms of biological role, involved in the regulation of the intracellular balance of NAD and NADP, and is a key enzyme in the biosynthesis of NADP. Catalyzes specifically the phosphorylation on 2'-hydroxyl of the adenosine moiety of NAD to yield NADP. The polypeptide is NAD kinase (Lactobacillus helveticus (strain DPC 4571)).